We begin with the raw amino-acid sequence, 347 residues long: Protein RecA (347 aa).

64 to 71 (GPESSGKT) contacts ATP.

The protein belongs to the RecA family.

The protein resides in the cytoplasm. Its function is as follows. Can catalyze the hydrolysis of ATP in the presence of single-stranded DNA, the ATP-dependent uptake of single-stranded DNA by duplex DNA, and the ATP-dependent hybridization of homologous single-stranded DNAs. It interacts with LexA causing its activation and leading to its autocatalytic cleavage. This is Protein RecA from Bartonella bacilliformis (strain ATCC 35685 / KC583 / Herrer 020/F12,63).